Consider the following 179-residue polypeptide: Large ribosomal subunit protein uL5 (179 aa).

It belongs to the universal ribosomal protein uL5 family. In terms of assembly, part of the 50S ribosomal subunit; part of the 5S rRNA/L5/L18/L25 subcomplex. Contacts the 5S rRNA and the P site tRNA. Forms a bridge to the 30S subunit in the 70S ribosome.

Functionally, this is one of the proteins that bind and probably mediate the attachment of the 5S RNA into the large ribosomal subunit, where it forms part of the central protuberance. In the 70S ribosome it contacts protein S13 of the 30S subunit (bridge B1b), connecting the 2 subunits; this bridge is implicated in subunit movement. Contacts the P site tRNA; the 5S rRNA and some of its associated proteins might help stabilize positioning of ribosome-bound tRNAs. The sequence is that of Large ribosomal subunit protein uL5 from Alkaliphilus oremlandii (strain OhILAs) (Clostridium oremlandii (strain OhILAs)).